A 735-amino-acid polypeptide reads, in one-letter code: DNA replication licensing factor mcm5-B (735 aa).

Residues 332–538 enclose the MCM domain; the sequence is IYETVAKSIA…RDMTLAKHVM (207 aa). Arg-372 contributes to the ADP binding site. An Arginine finger motif is present at residues 513–516; that stretch reads SRFD.

This sequence belongs to the MCM family. Component of the mcm2-7 complex (RLF-M). The complex forms a toroidal hexameric ring with the proposed subunit order mcm2-mcm6-mcm4-mcm7-mcm3-mcm5. The heterodimer of mmcm3/mcm5 interacts with mcm4, mmcm6, mcm7 and weakly with mcm2. Component of the CMG helicase complex, composed of the mcm2-7 complex, the GINS complex and cdc45.

It is found in the nucleus. It localises to the chromosome. It catalyses the reaction ATP + H2O = ADP + phosphate + H(+). In terms of biological role, acts as a component of the MCM2-7 complex (MCM complex) which is the replicative helicase essential for 'once per cell cycle' DNA replication initiation and elongation in eukaryotic cells. Core component of CDC45-MCM-GINS (CMG) helicase, the molecular machine that unwinds template DNA during replication, and around which the replisome is built. The active ATPase sites in the MCM2-7 ring are formed through the interaction surfaces of two neighboring subunits such that a critical structure of a conserved arginine finger motif is provided in trans relative to the ATP-binding site of the Walker A box of the adjacent subunit. The six ATPase active sites, however, are likely to contribute differentially to the complex helicase activity. The polypeptide is DNA replication licensing factor mcm5-B (mcm5-b) (Xenopus laevis (African clawed frog)).